The chain runs to 1004 residues: Glycine dehydrogenase (decarboxylating), mitochondrial (1004 aa).

Lysine 738 carries the post-translational modification N6-(pyridoxal phosphate)lysine.

Belongs to the GcvP family. In terms of assembly, homodimer. Interacts with GCSH. The glycine cleavage system is composed of four proteins: P (GLDC), T (GCST), L (DLD) and H (GCSH). The cofactor is pyridoxal 5'-phosphate. As to expression, liver (at protein level).

Its subcellular location is the mitochondrion. The catalysed reaction is N(6)-[(R)-lipoyl]-L-lysyl-[glycine-cleavage complex H protein] + glycine + H(+) = N(6)-[(R)-S(8)-aminomethyldihydrolipoyl]-L-lysyl-[glycine-cleavage complex H protein] + CO2. Stimulated by lipoic acid. Inhibited in presence of methylamine. Its function is as follows. The glycine cleavage system catalyzes the degradation of glycine. The P protein (GLDC) binds the alpha-amino group of glycine through its pyridoxal phosphate cofactor; CO(2) is released and the remaining methylamine moiety is then transferred to the lipoamide cofactor of the H protein (GCSH). The chain is Glycine dehydrogenase (decarboxylating), mitochondrial from Gallus gallus (Chicken).